The following is a 318-amino-acid chain: Replication factor C small subunit (318 aa).

43 to 50 provides a ligand contact to ATP; that stretch reads GSVGTGKT.

This sequence belongs to the activator 1 small subunits family. RfcS subfamily. As to quaternary structure, heteromultimer composed of small subunits (RfcS) and large subunits (RfcL).

Its function is as follows. Part of the RFC clamp loader complex which loads the PCNA sliding clamp onto DNA. The sequence is that of Replication factor C small subunit from Thermoplasma volcanium (strain ATCC 51530 / DSM 4299 / JCM 9571 / NBRC 15438 / GSS1).